We begin with the raw amino-acid sequence, 248 residues long: uncharacterized protein (248 aa).

The N-terminal stretch at 1-26 (MVAPRISPKIVLVGFALFAIISASLA) is a signal peptide.

This is an uncharacterized protein from Acanthamoeba polyphaga mimivirus (APMV).